The chain runs to 218 residues: Adenylate kinase (218 aa).

ATP is bound at residue 10 to 15; it reads GAGKGT. The tract at residues 30-59 is NMP; it reads STGDMLRAAVKAGTPLGIEAKKVMDAGGLM. Residues Thr-31, Arg-36, 57–59, 85–88, and Gln-92 each bind AMP; these read GLM and GYPR. The segment at 122–159 is LID; the sequence is GRWVHLASGRSYNTQSNPPKVAGQDDITGEALIQRDDD. Residues Arg-123 and 132–133 contribute to the ATP site; that span reads SY. Residues Arg-156 and Arg-167 each coordinate AMP. Gly-203 contributes to the ATP binding site.

The protein belongs to the adenylate kinase family. In terms of assembly, monomer.

It localises to the cytoplasm. The catalysed reaction is AMP + ATP = 2 ADP. Its pathway is purine metabolism; AMP biosynthesis via salvage pathway; AMP from ADP: step 1/1. Functionally, catalyzes the reversible transfer of the terminal phosphate group between ATP and AMP. Plays an important role in cellular energy homeostasis and in adenine nucleotide metabolism. This is Adenylate kinase from Bordetella avium (strain 197N).